Consider the following 681-residue polypeptide: Potassium-transporting ATPase ATP-binding subunit 1 (681 aa).

Transmembrane regions (helical) follow at residues 30 to 50 (LLVYVGAILATSLYFLGFFGI), 59 to 79 (LAIALILWFTVLFANFAEAIA), 216 to 236 (ILLVTLSIIFLAVSATLLPFT), and 255 to 275 (IALLVCLAPTTIGALLSSIGI). Residue Asp306 is the 4-aspartylphosphate intermediate of the active site. ATP contacts are provided by residues Asp343, Glu347, 376–383 (FTATTRMS), and Lys394. 2 residues coordinate Mg(2+): Asp517 and Asp521. The next 3 helical transmembrane spans lie at 587–607 (FAIIPVLFYGIFPQLEALNLM), 615–635 (AILSAIIYNAVIIIFLIPLSL), and 661–681 (LIAPFIAIKLIDMLLTVLGIV).

This sequence belongs to the cation transport ATPase (P-type) (TC 3.A.3) family. Type IA subfamily. In terms of assembly, the system is composed of three essential subunits: KdpA, KdpB and KdpC.

It localises to the cell membrane. The catalysed reaction is K(+)(out) + ATP + H2O = K(+)(in) + ADP + phosphate + H(+). Its function is as follows. Part of the high-affinity ATP-driven potassium transport (or Kdp) system, which catalyzes the hydrolysis of ATP coupled with the electrogenic transport of potassium into the cytoplasm. This subunit is responsible for energy coupling to the transport system and for the release of the potassium ions to the cytoplasm. This is Potassium-transporting ATPase ATP-binding subunit 1 from Listeria innocua serovar 6a (strain ATCC BAA-680 / CLIP 11262).